The chain runs to 413 residues: Glucose-1-phosphate adenylyltransferase (413 aa).

Alpha-D-glucose 1-phosphate contacts are provided by residues Tyr102, Gly167, 182–183 (EK), and Ser200.

Belongs to the bacterial/plant glucose-1-phosphate adenylyltransferase family. As to quaternary structure, homotetramer.

The catalysed reaction is alpha-D-glucose 1-phosphate + ATP + H(+) = ADP-alpha-D-glucose + diphosphate. Its pathway is glycan biosynthesis; glycogen biosynthesis. Its function is as follows. Involved in the biosynthesis of ADP-glucose, a building block required for the elongation reactions to produce glycogen. Catalyzes the reaction between ATP and alpha-D-glucose 1-phosphate (G1P) to produce pyrophosphate and ADP-Glc. The protein is Glucose-1-phosphate adenylyltransferase of Deinococcus geothermalis (strain DSM 11300 / CIP 105573 / AG-3a).